A 651-amino-acid chain; its full sequence is Sodium/potassium/calcium exchanger 2 (651 aa).

Topologically, residues 1–38 (MALCKKTVGSVLEEWCLNEPLFGCKRHQNVRKKLRLIR) are cytoplasmic. Residues 39 to 59 (IIGLLVSVVAISTFSLSISAF) form a helical membrane-spanning segment. Residues 60–134 (FKMETHSTVL…DLFSLEERRK (75 aa)) lie on the Extracellular side of the membrane. The interval 92-123 (QNEGSTPDSPTSMKHEAEHDNATEEHSKGEYP) is disordered. Residues 93 to 103 (NEGSTPDSPTS) are compositionally biased toward polar residues. Over residues 104–122 (MKHEAEHDNATEEHSKGEY) the composition is skewed to basic and acidic residues. N112 carries an N-linked (GlcNAc...) asparagine glycan. A helical membrane pass occupies residues 135-155 (GAVILHVIGMIYMFIALAIVC). Residues 156 to 179 (DEFFVPSLTVITEKLSISDDVAGA) lie on the Cytoplasmic side of the membrane. The stretch at 176–216 (VAGATFMAAGGSAPELFTSLIGVFISHSNVGIGTIVGSAVF) is one Alpha-1 repeat. The chain crosses the membrane as a helical span at residues 180 to 200 (TFMAAGGSAPELFTSLIGVFI). At 201 to 206 (SHSNVG) the chain is on the extracellular side. A helical membrane pass occupies residues 207 to 227 (IGTIVGSAVFNILFVIGMCAL). Topologically, residues 228 to 245 (FSREILNLTWWPLFRDVS) are cytoplasmic. A helical transmembrane segment spans residues 246-266 (FYIVDLILLIIFFLDNLIMWW). Over 267–459 (ESLTLLTAYF…SLAWPDTPRK (193 aa)) the chain is Extracellular. Over residues 304 to 322 (ATTGDAEGKSPTAGDKDDQ) the composition is skewed to basic and acidic residues. The disordered stretch occupies residues 304-338 (ATTGDAEGKSPTAGDKDDQTLTTKPRLQRGGSSAS). The span at 323 to 338 (TLTTKPRLQRGGSSAS) shows a compositional bias: polar residues. Residues 460 to 480 (QLTYLLVLPIVFPLWVSLPDV) traverse the membrane as a helical segment. The Cytoplasmic segment spans residues 481 to 487 (RNPRSRK). The helical transmembrane segment at 488-508 (FFPITFFGSISWIAFFSYLMV) threads the bilayer. Residues 509–523 (WWAHQVGETIGISEE) are Extracellular-facing. Residues 524-544 (IMGLTILAAGTSIPDLITSVI) traverse the membrane as a helical segment. The stretch at 531 to 562 (AAGTSIPDLITSVIVARKGLGDMAVSSSVGSN) is one Alpha-2 repeat. Over 545–562 (VARKGLGDMAVSSSVGSN) the chain is Cytoplasmic. The helical transmembrane segment at 563-583 (IFDITVGLPLPWLLYAVINNF) threads the bilayer. Topologically, residues 584–592 (SPVTVSSNG) are extracellular. Residues 593-613 (LFCAIVLLFIMLLFVILSIAF) form a helical membrane-spanning segment. At 614-620 (CKWRMNK) the chain is on the cytoplasmic side. Residues 621–641 (FLGFLMFGLYFVFLIVSVLLE) traverse the membrane as a helical segment. Over 642-651 (DKVIQCPVSI) the chain is Extracellular.

The protein belongs to the Ca(2+):cation antiporter (CaCA) (TC 2.A.19) family. SLC24A subfamily. As to expression, retinal cones. Found in the cone inner segment layer and in a subpopulation of ganglion cells.

The protein resides in the cell membrane. It carries out the reaction Ca(2+)(out) + K(+)(out) + 4 Na(+)(in) = Ca(2+)(in) + K(+)(in) + 4 Na(+)(out). Functionally, calcium, potassium:sodium antiporter that transports 1 Ca(2+) and 1 K(+) in exchange for 4 Na(+). Required for learming and memory by regulating neuronal Ca(2+), which is essential for the development of synaptic plasticity. This chain is Sodium/potassium/calcium exchanger 2 (SLC24A2), found in Gallus gallus (Chicken).